The following is a 1436-amino-acid chain: Probable ATP-dependent RNA helicase spindle-E (1436 aa).

In terms of domain architecture, Helicase ATP-binding spans 124–291; sequence LAAINANPVV…FTTTNSIPPV (168 aa). 137-144 contributes to the ATP binding site; that stretch reads GETGCGKT. A DEAH box motif is present at residues 237–240; it reads DEVH. The region spanning 337–524 is the Helicase C-terminal domain; the sequence is KIIMVIDNME…NSVLRAKELE (188 aa). The Tudor domain maps to 940–1003; sequence ACDISKGMMV…RFMSEELIQQ (64 aa).

It belongs to the DEAD box helicase family. DEAH subfamily.

It is found in the cytoplasm. It catalyses the reaction ATP + H2O = ADP + phosphate + H(+). In terms of biological role, probable ATP-binding RNA helicase which plays a central role during spermatogenesis and oogenesis by repressing transposable elements and preventing their mobilization, which is essential for the germline integrity. Acts via the piRNA metabolic process, which mediates the repression of transposable elements during meiosis by forming complexes composed of piRNAs and Piwi and govern the methylation and subsequent repression of transposons. Involved in the repression of LTR retrotransposon copia. Also involved in telomere regulation by repressing specialized telomeric retroelements HeT-A, TAHRE, and TART; Drosophila telomeres being maintained by transposition of specialized telomeric retroelements. Involved in telomeric trans-silencing, a repression mechanism by which a transposon or a transgene inserted in subtelomeric heterochromatin has the capacity to repress in trans in the female germline, a homologous transposon, or transgene located in euchromatin. Involved in the repression of testis-expressed Stellate genes by the homologous Su(Ste) repeats. Required for anteroposterior and dorsoventral axis formation during oogenesis. This is Probable ATP-dependent RNA helicase spindle-E (spn-E) from Drosophila yakuba (Fruit fly).